We begin with the raw amino-acid sequence, 305 residues long: MADVSVDQSKLPGVKEVCRDFAVLEDHTLAHSLQEQEIEHHLASNIQRNRLVQHDLQVAKQLQEEDLKAQAQLQKRYKALEQHDCEIAQEIQEKLTIEAERRRIQEKKDEDIARLLQEKELQEEKRRKKHTPEFSGGSVFGDNYYHEDGGMKPRGIKEAVSTPARASHRDQEWYDAEIARKLQEEELLATHVDMRAAQVAQDEEIARLLMAEEKKAYKKAKEREKSSLDKRKHDPECKLKAKSAHSKSKEGDEAHRSKIDRPSRPPPPTMMGLEDTDPTHFTNQHSTTWHLPKSESSQKGFHNKQ.

The residue at position 2 (Ala2) is an N-acetylalanine. Ser5 is modified (phosphoserine). The stretch at 86–130 (EIAQEIQEKLTIEAERRRIQEKKDEDIARLLQEKELQEEKRRKKH) forms a coiled coil. 2 disordered regions span residues 122 to 142 (QEEK…VFGD) and 218 to 305 (KKAK…HNKQ). Composition is skewed to basic and acidic residues over residues 218-239 (KKAK…ECKL) and 247-263 (KSKE…DRPS). Residues 279-305 (THFTNQHSTTWHLPKSESSQKGFHNKQ) show a composition bias toward polar residues.

Interacts with RNF126. In terms of processing, phosphorylated on tyrosine residues. In terms of tissue distribution, widely expressed.

It localises to the cytoplasm. Involved in EGFR signaling. In Mus musculus (Mouse), this protein is Coiled-coil domain-containing protein 50 (Ccdc50).